Here is a 248-residue protein sequence, read N- to C-terminus: tRNA uridine(34) hydroxylase (248 aa).

Residues 128–222 (EGRPVVMLDT…YFEEVGGAHY (95 aa)) enclose the Rhodanese domain. Cys-182 (cysteine persulfide intermediate) is an active-site residue.

The protein belongs to the TrhO family.

It catalyses the reaction uridine(34) in tRNA + AH2 + O2 = 5-hydroxyuridine(34) in tRNA + A + H2O. Catalyzes oxygen-dependent 5-hydroxyuridine (ho5U) modification at position 34 in tRNAs. The protein is tRNA uridine(34) hydroxylase of Thiobacillus denitrificans (strain ATCC 25259 / T1).